Reading from the N-terminus, the 275-residue chain is tRNA pseudouridine synthase A (275 aa).

Aspartate 62 acts as the Nucleophile in catalysis. Residue tyrosine 124 participates in substrate binding.

The protein belongs to the tRNA pseudouridine synthase TruA family. As to quaternary structure, homodimer.

It catalyses the reaction uridine(38/39/40) in tRNA = pseudouridine(38/39/40) in tRNA. Functionally, formation of pseudouridine at positions 38, 39 and 40 in the anticodon stem and loop of transfer RNAs. In Herminiimonas arsenicoxydans, this protein is tRNA pseudouridine synthase A.